The sequence spans 219 residues: Glutamine transport system permease protein GlnP (219 aa).

The Periplasmic segment spans residues 1 to 22; the sequence is MQFDWSAIWPAIPLLIEGAKMT. The ABC transmembrane type-1 domain maps to 19–209; it reads AKMTLWISVL…IITLVLSFIL (191 aa). Residues 23–43 form a helical membrane-spanning segment; it reads LWISVLGLAGGLVIGLLAGFA. Over 44–53 the chain is Cytoplasmic; the sequence is RTFGGWIANH. The chain crosses the membrane as a helical span at residues 54 to 74; that stretch reads VALVFIEVIRGTPIVVQVMFI. Residues 75-88 lie on the Periplasmic side of the membrane; it reads YFALPMAFNDLRID. The helical transmembrane segment at 89 to 109 threads the bilayer; it reads PFTAAVVTIMINSGAYIAEIT. Topologically, residues 110-150 are cytoplasmic; it reads RGAVLSIHKGFREAGLALGLSRWETIRYVILPLALRRMLPP. Residues 151 to 171 form a helical membrane-spanning segment; that stretch reads LGNQWIISIKDTSLFIVIGVA. Residues 172 to 187 lie on the Periplasmic side of the membrane; sequence ELTRQGQEIIAGNFRA. The chain crosses the membrane as a helical span at residues 188-208; the sequence is LEIWSAVAVFYLIITLVLSFI. Residues 209 to 219 are Cytoplasmic-facing; the sequence is LRRLERRMKIL.

The protein belongs to the binding-protein-dependent transport system permease family. HisMQ subfamily.

The protein localises to the cell inner membrane. Functionally, part of the binding-protein-dependent transport system for glutamine; probably responsible for the translocation of the substrate across the membrane. The polypeptide is Glutamine transport system permease protein GlnP (glnP) (Escherichia coli O6:H1 (strain CFT073 / ATCC 700928 / UPEC)).